Here is a 372-residue protein sequence, read N- to C-terminus: tRNA-specific 2-thiouridylase MnmA (372 aa).

ATP-binding positions include 13-20 (GMSGGVDS) and Met39. Residues 99 to 101 (NPD) are interaction with target base in tRNA. Catalysis depends on Cys104, which acts as the Nucleophile. Cys104 and Cys200 form a disulfide bridge. Gly128 serves as a coordination point for ATP. The segment at 150 to 152 (KDQ) is interaction with tRNA. Residue Cys200 is the Cysteine persulfide intermediate of the active site. Residues 310-311 (RY) form an interaction with tRNA region.

This sequence belongs to the MnmA/TRMU family.

The protein resides in the cytoplasm. It carries out the reaction S-sulfanyl-L-cysteinyl-[protein] + uridine(34) in tRNA + AH2 + ATP = 2-thiouridine(34) in tRNA + L-cysteinyl-[protein] + A + AMP + diphosphate + H(+). Functionally, catalyzes the 2-thiolation of uridine at the wobble position (U34) of tRNA, leading to the formation of s(2)U34. This Bacillus licheniformis (strain ATCC 14580 / DSM 13 / JCM 2505 / CCUG 7422 / NBRC 12200 / NCIMB 9375 / NCTC 10341 / NRRL NRS-1264 / Gibson 46) protein is tRNA-specific 2-thiouridylase MnmA.